The following is a 211-amino-acid chain: V-type ATP synthase subunit D (211 aa).

This sequence belongs to the V-ATPase D subunit family.

Its function is as follows. Produces ATP from ADP in the presence of a proton gradient across the membrane. This Enterococcus faecalis (strain ATCC 700802 / V583) protein is V-type ATP synthase subunit D.